The sequence spans 177 residues: Dihydrofolate reductase type 9 (177 aa).

The DHFR domain occupies 3 to 167 (SLNMIVAVNK…TKLIFQIWIN (165 aa)).

It belongs to the dihydrofolate reductase family. In terms of assembly, homodimer.

It carries out the reaction (6S)-5,6,7,8-tetrahydrofolate + NADP(+) = 7,8-dihydrofolate + NADPH + H(+). Its pathway is cofactor biosynthesis; tetrahydrofolate biosynthesis; 5,6,7,8-tetrahydrofolate from 7,8-dihydrofolate: step 1/1. In terms of biological role, key enzyme in folate metabolism. Catalyzes an essential reaction for de novo glycine and purine synthesis, and for DNA precursor synthesis. The protein is Dihydrofolate reductase type 9 (dhfrIX) of Escherichia coli.